We begin with the raw amino-acid sequence, 321 residues long: Protein FAM110C (321 aa).

2 disordered regions span residues 1–84 and 111–203; these read MRAL…APAP and RGSG…SQSD. 2 stretches are compositionally biased toward basic and acidic residues: residues 15-46 and 131-145; these read LLPRDPAATRDPDAARPARRSAVERLAADRAK and GKDKAPVPRTGDEGK. A compositionally biased stretch (low complexity) spans 169–181; that stretch reads APAARSAAPSSVP. Residue Ser-241 is modified to Phosphoserine.

Belongs to the FAM110 family. Interacts with AKT1; the interaction is transient and follows AKT1 activation. Interacts with PPP2CA and alpha-tubulin. As to expression, detected in stomach, thyroid, trachea, adrenal gland and testis, and at low levels in prostate, ovary, intestine, colon, spinal cord and lymph node.

It is found in the cytoplasm. The protein localises to the cytoskeleton. The protein resides in the microtubule organizing center. It localises to the centrosome. Its subcellular location is the spindle pole. It is found in the nucleus. May play a role in microtubule organization. May play a role in cell spreading and cell migration of epithelial cells; the function may involve the AKT1 signaling pathway. This Homo sapiens (Human) protein is Protein FAM110C (FAM110C).